A 203-amino-acid chain; its full sequence is Twist-related protein 1 (203 aa).

The span at methionine 1 to serine 18 shows a compositional bias: low complexity. The disordered stretch occupies residues methionine 1 to glutamate 106. Basic residues predominate over residues arginine 34–arginine 43. 2 stretches are compositionally biased toward gly residues: residues alanine 46–glutamate 65 and glycine 80–serine 100. The region spanning threonine 109–leucine 160 is the bHLH domain. The tract at residues glutamine 162–arginine 192 is sufficient for transactivation activity.

In terms of assembly, efficient DNA binding requires dimerization with another bHLH protein. Homodimer or heterodimer with E proteins such as TCF3. ID1 binds preferentially to TCF3 but does not interact efficiently with TWIST1 so ID1 levels control the amount of TCF3 available to dimerize with TWIST and thus determine the type of dimer formed.

The protein resides in the nucleus. In terms of biological role, acts as a transcriptional regulator. Inhibits myogenesis by sequestrating E proteins, inhibiting trans-activation by MEF2, and inhibiting DNA-binding by MYOD1 through physical interaction. This interaction probably involves the basic domains of both proteins. Also represses expression of pro-inflammatory cytokines such as TNFA and IL1B. Regulates cranial suture patterning and fusion. Activates transcription as a heterodimer with E proteins. Regulates gene expression differentially, depending on dimer composition. Homodimers induce expression of FGFR2 and POSTN while heterodimers repress FGFR2 and POSTN expression and induce THBS1 expression. Heterodimerization is also required for osteoblast differentiation. Represses the activity of the circadian transcriptional activator: NPAS2-BMAL1 heterodimer. This is Twist-related protein 1 (TWIST1) from Saguinus oedipus (Cotton-top tamarin).